The chain runs to 456 residues: Enolase (456 aa).

Q169 contributes to the (2R)-2-phosphoglycerate binding site. E211 serves as the catalytic Proton donor. Residues D252, E314, and D341 each coordinate Mg(2+). Positions 366, 395, 396, and 417 each coordinate (2R)-2-phosphoglycerate. K366 acts as the Proton acceptor in catalysis.

It belongs to the enolase family. Mg(2+) serves as cofactor.

It is found in the cytoplasm. The protein resides in the secreted. The protein localises to the cell surface. It catalyses the reaction (2R)-2-phosphoglycerate = phosphoenolpyruvate + H2O. It functions in the pathway carbohydrate degradation; glycolysis; pyruvate from D-glyceraldehyde 3-phosphate: step 4/5. Functionally, catalyzes the reversible conversion of 2-phosphoglycerate (2-PG) into phosphoenolpyruvate (PEP). It is essential for the degradation of carbohydrates via glycolysis. This Metamycoplasma arthritidis (strain 158L3-1) (Mycoplasma arthritidis) protein is Enolase.